Reading from the N-terminus, the 1088-residue chain is RNA-directed RNA polymerase (1088 aa).

The region spanning 501–687 is the RdRp catalytic domain; it reads LSYGDVTRFL…AKRYIAGGKI (187 aa).

It belongs to the reoviridae RNA-directed RNA polymerase family. In terms of assembly, interacts with VP3 (Potential). Interacts with VP2; this interaction activates VP1. Interacts with NSP5; this interaction is probably necessary for the formation of functional virus factories. Interacts with NSP2; this interaction is weak. It depends on Mg(2+) as a cofactor.

It localises to the virion. It carries out the reaction RNA(n) + a ribonucleoside 5'-triphosphate = RNA(n+1) + diphosphate. Functionally, RNA-directed RNA polymerase that is involved in both transcription and genome replication. Together with VP3 capping enzyme, forms an enzyme complex positioned near the channels situated at each of the five-fold vertices of the core. Following infection, the outermost layer of the virus is lost, leaving a double-layered particle (DLP) made up of the core and VP6 shell. VP1 then catalyzes the transcription of fully conservative plus-strand genomic RNAs that are extruded through the DLP's channels into the cytoplasm where they function as mRNAs for translation of viral proteins. One copy of each of the viral (+)RNAs is also recruited during core assembly, together with newly synthesized polymerase complexes and VP2. The polymerase of these novo-formed particles catalyzes the synthesis of complementary minus-strands leading to dsRNA formation. To do so, the polymerase specifically recognizes and binds 4 bases 5'-UGUG-3' in the conserved 3'-sequence of plus-strand RNA templates. VP2 presumably activates the autoinhibited VP1-RNA complex to coordinate packaging and genome replication. Once dsRNA synthesis is complete, the polymerase switches to the transcriptional mode, thus providing secondary transcription. This Homo sapiens (Human) protein is RNA-directed RNA polymerase.